A 274-amino-acid chain; its full sequence is Putative pyruvate, phosphate dikinase regulatory protein (274 aa).

ADP is bound at residue 153–160 (GISRTSKT).

Belongs to the pyruvate, phosphate/water dikinase regulatory protein family. PDRP subfamily.

The catalysed reaction is N(tele)-phospho-L-histidyl/L-threonyl-[pyruvate, phosphate dikinase] + ADP = N(tele)-phospho-L-histidyl/O-phospho-L-threonyl-[pyruvate, phosphate dikinase] + AMP + H(+). It carries out the reaction N(tele)-phospho-L-histidyl/O-phospho-L-threonyl-[pyruvate, phosphate dikinase] + phosphate + H(+) = N(tele)-phospho-L-histidyl/L-threonyl-[pyruvate, phosphate dikinase] + diphosphate. Its function is as follows. Bifunctional serine/threonine kinase and phosphorylase involved in the regulation of the pyruvate, phosphate dikinase (PPDK) by catalyzing its phosphorylation/dephosphorylation. The chain is Putative pyruvate, phosphate dikinase regulatory protein from Bartonella henselae (strain ATCC 49882 / DSM 28221 / CCUG 30454 / Houston 1) (Rochalimaea henselae).